The chain runs to 228 residues: Ribonuclease HII (228 aa).

Residues 26–214 (RAVAGVDEVG…VRAHSRFPLD (189 aa)) enclose the RNase H type-2 domain. Positions 32, 33, and 124 each coordinate a divalent metal cation.

The protein belongs to the RNase HII family. It depends on Mn(2+) as a cofactor. Requires Mg(2+) as cofactor.

It is found in the cytoplasm. The enzyme catalyses Endonucleolytic cleavage to 5'-phosphomonoester.. Its function is as follows. Endonuclease that specifically degrades the RNA of RNA-DNA hybrids. This Solibacter usitatus (strain Ellin6076) protein is Ribonuclease HII.